We begin with the raw amino-acid sequence, 644 residues long: Cell pattern formation-associated protein StuA (644 aa).

Over residues 18–33 (ATAHAPASAAPSGISH) the composition is skewed to low complexity. Disordered stretches follow at residues 18 to 58 (ATAH…PGYP) and 86 to 120 (QLPA…APPG). The span at 38 to 47 (PQSSMMQPGQ) shows a compositional bias: polar residues. The segment covering 87-104 (LPAMSSSGPSPSLSGAQS) has biased composition (low complexity). The 107-residue stretch at 124–230 (RVTATLWEDE…HDIGALLYHP (107 aa)) folds into the HTH APSES-type domain. The H-T-H motif DNA-binding region spans 158–179 (GTKLLNVAGMTRGRRDGILKSE). The interval 239–644 (GSAAMAAVDR…HTMTAQRARR (406 aa)) is disordered. Over residues 253-269 (SMQTQRYISGPTTSQPP) the composition is skewed to polar residues. Low complexity predominate over residues 315–328 (SASSIMGMSNSGSS). Polar residues-rich tracts occupy residues 334–357 (ANVQ…TRSV), 371–383 (QAIS…SYDN), and 395–404 (PGQYNTQGQS). Positions 456 to 465 (EGDHEHDNEY) are enriched in basic and acidic residues. Over residues 509–524 (GSGRATPRTTTTSQTQ) the composition is skewed to low complexity. The span at 525–544 (WNSGYPTPQRQGPPSSNLYN) shows a compositional bias: polar residues. The tract at residues 584–612 (KRGRDDDDEDPYRPDSVQSDDMGGLKRRK) is nuclear localization domain. The segment covering 635–644 (HTMTAQRARR) has biased composition (polar residues).

The protein belongs to the EFG1/PHD1/stuA family.

It is found in the nucleus. Its function is as follows. Transcription factor that regulates asexual reproduction. Binds the StuA-response elements (StRE) with the consensus sequence 5'-(A/T)CGCG(T/A)N(A/C)-3' at the promoters of target genes. Required for pathogenicity and positively regulates the synthesis of the mycotoxin alternariol. Acts as a positive regulator of Tox3 but is not required for the expression of ToxA. Also acts as a central regulator of carbon metabolism including glycolysis, the TCA cycle, and amino acid synthesis. The protein is Cell pattern formation-associated protein StuA of Phaeosphaeria nodorum (strain SN15 / ATCC MYA-4574 / FGSC 10173) (Glume blotch fungus).